The following is a 950-amino-acid chain: Kinase suppressor of Ras 2 (950 aa).

The interval 239–296 is disordered; the sequence is PPLESGHRSLPPSPRQRHAVRTPPRTPNIVTTVTPPGTPPMRKKNKLKPPGTPPPSSR. The span at 259 to 273 shows a compositional bias: low complexity; that stretch reads RTPPRTPNIVTTVTP. A phosphothreonine mark is found at Thr272 and Thr276. The Phorbol-ester/DAG-type zinc finger occupies 412–456; sequence KHRFSTKYWMSQTCTVCGKGMLFGLKCKNCKLKCHNKCTKEAPPC. Residues His413, Cys425, Cys428, Cys438, Cys441, His446, Cys449, and Cys456 each contribute to the Zn(2+) site. At Ser474 the chain carries Phosphoserine; by MARK3. Residue Thr497 is modified to Phosphothreonine. Residues 498–556 form a disordered region; that stretch reads LPKTNKINKDHIPVPYQPDSSSNPSSTTSSTPSSPAPPLPPSATPPSPLHPSPQCTRQQ. Residues 517–530 are compositionally biased toward low complexity; it reads SSSNPSSTTSSTPS. Positions 531–548 are enriched in pro residues; it reads SPAPPLPPSATPPSPLHP. The region spanning 666-931 is the Protein kinase domain; it reads LEIGELIGKG…TKLMDMLEKL (266 aa). 672-680 contributes to the ATP binding site; the sequence is IGKGRFGQV. The active-site Proton donor/acceptor is Asp786. ATP-binding residues include Lys788 and Asp803.

The protein belongs to the protein kinase superfamily. TKL Ser/Thr protein kinase family. In terms of assembly, heterodimerizes (via N-terminus) with BRAF (via N-terminus) in a MAP2K1/MEK1-dependent manner. Interacts with BRAF; this increases the low intrinsic protein kinase activity of KSR2. Interacts with MAP2K1, forming a heterodimer that can dimerize to form a heterotetramer. Interacts with MAP3K8, MAPK, RAS and RAF. In terms of processing, phosphorylated on Ser-474 by MARK3. Mainly expressed in brain and kidney.

Its subcellular location is the cytoplasm. The protein resides in the membrane. It carries out the reaction L-seryl-[protein] + ATP = O-phospho-L-seryl-[protein] + ADP + H(+). It catalyses the reaction L-threonyl-[protein] + ATP = O-phospho-L-threonyl-[protein] + ADP + H(+). Its activity is regulated as follows. Kinase activity is inhibited by ASC24. Location-regulated scaffold connecting MEK to RAF. Has very low protein kinase activity and can phosphorylate MAP2K1 at several Ser and Thr residues with very low efficiency (in vitro). Acts as MAP2K1/MEK1-dependent allosteric activator of BRAF; upon binding to MAP2K1/MEK1, dimerizes with BRAF and promotes BRAF-mediated phosphorylation of MAP2K1/MEK1. Interaction with BRAF enhances KSR2-mediated phosphorylation of MAP2K1 (in vitro). Blocks MAP3K8 kinase activity and MAP3K8-mediated signaling. Acts as a negative regulator of MAP3K3-mediated activation of ERK, JNK and NF-kappa-B pathways, inhibiting MAP3K3-mediated interleukin-8 production. This is Kinase suppressor of Ras 2 from Homo sapiens (Human).